A 198-amino-acid polypeptide reads, in one-letter code: Leucine-rich melanocyte differentiation-associated protein (198 aa).

LRR repeat units lie at residues 2–22 (EKYL…EGLS), 26–47 (SLEE…PGLP), 48–69 (RLHT…LDHL), and 75–95 (ALEY…VSLE). The LRRCT domain occupies 96–134 (KDEEDYKRYRCFVLYKLPNLKFLDAQKVTRQEREEALVR).

In the embryo, expressed in melanoblasts. In the fetus, expressed in melanocytes. Not detected in retinal pigment epithelial cells.

Functionally, required for melanocyte differentiation. In Homo sapiens (Human), this protein is Leucine-rich melanocyte differentiation-associated protein.